The chain runs to 308 residues: Protease HtpX homolog (308 aa).

The next 2 helical transmembrane spans lie at 16–36 (LLSL…IYAV) and 39–59 (YLFG…VLMM). Histidine 149 serves as a coordination point for Zn(2+). Glutamate 150 is an active-site residue. Histidine 153 provides a ligand contact to Zn(2+). The next 2 membrane-spanning stretches (helical) occupy residues 161 to 181 (VIMA…TTLF) and 192 to 212 (IILA…VLSV). Zn(2+) is bound at residue glutamate 217.

It belongs to the peptidase M48B family. Requires Zn(2+) as cofactor.

It localises to the cell membrane. The polypeptide is Protease HtpX homolog (Thermoplasma volcanium (strain ATCC 51530 / DSM 4299 / JCM 9571 / NBRC 15438 / GSS1)).